A 148-amino-acid chain; its full sequence is Large ribosomal subunit protein bL9 (148 aa).

This sequence belongs to the bacterial ribosomal protein bL9 family.

Its function is as follows. Binds to the 23S rRNA. The sequence is that of Large ribosomal subunit protein bL9 from Chromohalobacter salexigens (strain ATCC BAA-138 / DSM 3043 / CIP 106854 / NCIMB 13768 / 1H11).